Reading from the N-terminus, the 181-residue chain is MTATLNQPQVGTGRVVWFTGLSGAGKSTLASALHAELTARGVAVELLDGDAVRENLSKGLGFSKQDRDTNVRRIGFVAGLLAKHGVTVLVSAISPYAETRREVLSTLPNPTEVFVDAPLEVVTERDVKGLYLRALAGEIPHFTGVSDPYEAPQNPDLHLRTDRISVEEGVRQLLAHLGYGA.

Residue 20 to 27 (GLSGAGKS) coordinates ATP. The active-site Phosphoserine intermediate is S94.

Belongs to the APS kinase family.

It catalyses the reaction adenosine 5'-phosphosulfate + ATP = 3'-phosphoadenylyl sulfate + ADP + H(+). It functions in the pathway sulfur metabolism; hydrogen sulfide biosynthesis; sulfite from sulfate: step 2/3. Functionally, catalyzes the synthesis of activated sulfate. In Deinococcus geothermalis (strain DSM 11300 / CIP 105573 / AG-3a), this protein is Adenylyl-sulfate kinase.